A 495-amino-acid chain; its full sequence is PXA domain protein 1 (495 aa).

The region spanning 1–174 is the PXA domain; that stretch reads MAKLSSLLNP…KFIIYLSKAI (174 aa). The next 2 helical transmembrane spans lie at 7 to 27 and 235 to 255; these read LLNP…YSGI and WFFF…FVAE. Polar residues-rich tracts occupy residues 402 to 419 and 427 to 436; these read AVSS…QRSF and DSQTPSENSA. A disordered region spans residues 402 to 436; it reads AVSSPTKANTNKSHQRSFSIPKATKDSQTPSENSA. A helical membrane pass occupies residues 446–466; it reads AYSQIPVIPFFLPSDKLIMLV.

The protein localises to the endosome membrane. In terms of biological role, required for required for normal vacuolar morphology and for vacuolar protein transport. Also required for endosome-to-Golgi protein transport. This Schizosaccharomyces pombe (strain 972 / ATCC 24843) (Fission yeast) protein is PXA domain protein 1 (pxa1).